Consider the following 532-residue polypeptide: Vesicular acetylcholine transporter (532 aa).

Topologically, residues 1–33 (MESAEPAGQARAAATKLSEAVGAALQEPRRQRR) are cytoplasmic. A helical transmembrane segment spans residues 34–54 (LVLVIVCVALLLDNMLYMVIV). Residues 55–125 (PIVPDYIAHM…PTESEDVKIG (71 aa)) are Lumenal, vesicle-facing. Asn-89 and Asn-96 each carry an N-linked (GlcNAc...) asparagine glycan. Residues 126–146 (VLFASKAILQLLVNPLSGPFI) traverse the membrane as a helical segment. Over 147 to 152 (DRMSYD) the chain is Cytoplasmic. Residues 153–173 (VPLLIGLGVMFASTVLFAFAE) traverse the membrane as a helical segment. Over 174–182 (DYATLFAAR) the chain is Lumenal, vesicle. The chain crosses the membrane as a helical span at residues 183–203 (SLQGLGSAFADTSGIAMIADK). Over 204 to 213 (YPEEPERSRA) the chain is Cytoplasmic. The chain crosses the membrane as a helical span at residues 214–234 (LGVALAFISFGSLVAPPFGGI). The Lumenal, vesicle portion of the chain corresponds to 235-242 (LYEFAGKR). Residues 243-263 (VPFLVLAAVSLFDALLLLAVA) form a helical membrane-spanning segment. Residues 264-289 (KPFSAAARARANLPVGTPIHRLMLDP) lie on the Cytoplasmic side of the membrane. A helical membrane pass occupies residues 290-310 (YIAVVAGALTTCNIPLAFLEP). The Lumenal, vesicle portion of the chain corresponds to 311–325 (TIATWMKHTMAASEW). A helical transmembrane segment spans residues 326–346 (EMGMAWLPAFVPHVLGVYLTV). Residues 347-356 (RLAARYPHLQ) are Cytoplasmic-facing. A helical membrane pass occupies residues 357-377 (WLYGALGLAVIGASSCIVPAC). The Lumenal, vesicle segment spans residues 378–388 (RSFAPLVVSLC). The chain crosses the membrane as a helical span at residues 389–409 (GLCFGIALVDTALLPTLAFLV). Over 410 to 422 (DVRHVSVYGSVYA) the chain is Cytoplasmic. Residues 423-443 (IADISYSVAYALGPIVAGHIV) traverse the membrane as a helical segment. Residues 444-447 (HSLG) are Lumenal, vesicle-facing. A helical transmembrane segment spans residues 448–468 (FEQLSLGMGLANLLYAPVLLL). Topologically, residues 469 to 532 (LRNVGLLTRS…DDYNYYYTRS (64 aa)) are cytoplasmic. The segment at 471–532 (NVGLLTRSRS…DDYNYYYTRS (62 aa)) is mediates interaction with SEC14L1. The interval 502-523 (RPVSGQDGEPRSPPGPFDACED) is disordered.

Belongs to the major facilitator superfamily. Vesicular transporter family. Interacts with SEC14L1. In terms of tissue distribution, peripheral and central cholinergic nervous systems.

It localises to the cytoplasmic vesicle. Its subcellular location is the secretory vesicle. The protein localises to the synaptic vesicle membrane. It carries out the reaction acetylcholine(out) + 2 H(+)(in) = acetylcholine(in) + 2 H(+)(out). The catalysed reaction is choline(in) + 2 H(+)(out) = choline(out) + 2 H(+)(in). The enzyme catalyses serotonin(in) + 2 H(+)(out) = serotonin(out) + 2 H(+)(in). Potently inhibited by L-vesamicol, reserpine and tetrabenazine. Its function is as follows. Electrogenic antiporter that exchanges one cholinergic neurotransmitter, acetylcholine or choline, with two intravesicular protons across the membrane of synaptic vesicles. Uses the electrochemical proton gradient established by the V-type proton-pump ATPase to store neurotransmitters inside the vesicles prior to their release via exocytosis. Determines cholinergic vesicular quantal size at presynaptic nerve terminals in developing neuro-muscular junctions with an impact on motor neuron differentiation and innervation pattern. Part of forebrain cholinergic system, regulates hippocampal synapse transmissions that underlie spatial memory formation. Can transport serotonin. This chain is Vesicular acetylcholine transporter (SLC18A3), found in Homo sapiens (Human).